The chain runs to 967 residues: Disks large homolog 1 (967 aa).

The L27 domain maps to 5–65 (SSEKAHKAIE…LYEQTLLSER (61 aa)). One can recognise a PDZ 1 domain in the interval 202–289 (NIVLEKGHTG…VVSLSLKRRK (88 aa)). The disordered stretch occupies residues 324-351 (IHSPSAPIHPPPPPPVHHGSLSQLSVGQ). Residues 330-339 (PIHPPPPPPV) show a composition bias toward pro residues. 2 consecutive PDZ domains span residues 361-448 (VIDL…QQGT) and 510-591 (PVQL…QYRP). Residues 619–690 (RKSEYVRALF…PSKKRVEKRE (72 aa)) enclose the SH3 domain. The interval 673 to 723 (EETAEGVIPSKKRVEKRERLRRKQVNFNSGSQSLGRNSSTTGLENRRGSRS) is disordered. Positions 682–696 (SKKRVEKRERLRRKQ) are enriched in basic residues. A compositionally biased stretch (polar residues) spans 697–715 (VNFNSGSQSLGRNSSTTGL). Positions 769–955 (VRPVIILGAL…VLSKVYSIIS (187 aa)) constitute a Guanylate kinase-like domain.

This sequence belongs to the MAGUK family. As to quaternary structure, homooligomerizes; requires L27 domain. Interacts (via L27 domain) with ajm-1; the interaction regulates ajm-1 apical junction location. As to expression, expressed in the apical junctions in the hypodermis. Expressed in epithelial cells in the reproductive system including vulva, uterus and spermatheca.

The protein localises to the membrane. It is found in the apical cell membrane. It localises to the cell junction. Its subcellular location is the adherens junction. The protein resides in the lateral cell membrane. The protein localises to the cytoplasm. Its function is as follows. Essential multidomain scaffolding protein required for normal development. Recruits channels, receptors and signaling molecules to discrete plasma membrane domains in polarized cells. Required for proper embryonic elongation. Acts upstream of ajm-1 and becomes localized to apical junctions independently of ajm-1. With let-413, cooperatively regulates ajm-1 localization to apical junctions and the establishment of newly formed epithelia. Plays a role in assembling the adherens junction by clustering ajm-1 and other proteins, to form electron-dense structures; may form a compartment distinct to that of hmp-1 and associated proteins. Plays a role in the directed outgrowth of seam cells, towards neighboring seam cells, during larval development. In Caenorhabditis elegans, this protein is Disks large homolog 1.